The primary structure comprises 396 residues: Tryptophan synthase beta chain (396 aa).

The residue at position 88 (K88) is an N6-(pyridoxal phosphate)lysine.

Belongs to the TrpB family. In terms of assembly, tetramer of two alpha and two beta chains. Pyridoxal 5'-phosphate serves as cofactor.

It carries out the reaction (1S,2R)-1-C-(indol-3-yl)glycerol 3-phosphate + L-serine = D-glyceraldehyde 3-phosphate + L-tryptophan + H2O. Its pathway is amino-acid biosynthesis; L-tryptophan biosynthesis; L-tryptophan from chorismate: step 5/5. Functionally, the beta subunit is responsible for the synthesis of L-tryptophan from indole and L-serine. This chain is Tryptophan synthase beta chain, found in Shewanella baltica (strain OS195).